Here is a 278-residue protein sequence, read N- to C-terminus: Extracellular metalloprotease GLRG_06511 (278 aa).

The signal sequence occupies residues 1–19 (MQFKSLLVSALAAASTALA). Asn51 carries an N-linked (GlcNAc...) asparagine glycan. His190 provides a ligand contact to Zn(2+). The active site involves Glu191. His194 contributes to the Zn(2+) binding site. Cys227 and Cys254 form a disulfide bridge.

The protein belongs to the peptidase M43B family.

The protein resides in the secreted. Its function is as follows. Secreted metalloproteinase that allows assimilation of proteinaceous substrates. This chain is Extracellular metalloprotease GLRG_06511, found in Colletotrichum graminicola (strain M1.001 / M2 / FGSC 10212) (Maize anthracnose fungus).